The chain runs to 953 residues: Coatomer subunit beta-1 (953 aa).

5 HEAT repeats span residues 49–87 (ETLP…RDVA), 93–127 (PEMI…LNEP), 128–165 (ELLE…LPHG), 314–351 (DVMV…PRNV), and 393–430 (EVAG…TNPK).

Oligomeric complex that consists of at least the alpha, beta, beta', gamma, delta, epsilon and zeta subunits.

It localises to the cytoplasm. The protein resides in the golgi apparatus membrane. The protein localises to the cytoplasmic vesicle. Its subcellular location is the COPI-coated vesicle membrane. Functionally, the coatomer is a cytosolic protein complex that binds to dilysine motifs and reversibly associates with Golgi non-clathrin-coated vesicles, which further mediate biosynthetic protein transport from the ER, via the Golgi up to the trans Golgi network. Coatomer complex is required for budding from Golgi membranes, and is essential for the retrograde Golgi-to-ER transport of dilysine-tagged proteins. The sequence is that of Coatomer subunit beta-1 from Oryza sativa subsp. japonica (Rice).